Here is a 173-residue protein sequence, read N- to C-terminus: Translation initiation factor IF-3 (173 aa).

This sequence belongs to the IF-3 family. As to quaternary structure, monomer.

It localises to the cytoplasm. IF-3 binds to the 30S ribosomal subunit and shifts the equilibrium between 70S ribosomes and their 50S and 30S subunits in favor of the free subunits, thus enhancing the availability of 30S subunits on which protein synthesis initiation begins. The sequence is that of Translation initiation factor IF-3 from Caulobacter vibrioides (strain ATCC 19089 / CIP 103742 / CB 15) (Caulobacter crescentus).